Reading from the N-terminus, the 123-residue chain is Ribonuclease P protein component (123 aa).

The protein belongs to the RnpA family. Consists of a catalytic RNA component (M1 or rnpB) and a protein subunit.

It carries out the reaction Endonucleolytic cleavage of RNA, removing 5'-extranucleotides from tRNA precursor.. Its function is as follows. RNaseP catalyzes the removal of the 5'-leader sequence from pre-tRNA to produce the mature 5'-terminus. It can also cleave other RNA substrates such as 4.5S RNA. The protein component plays an auxiliary but essential role in vivo by binding to the 5'-leader sequence and broadening the substrate specificity of the ribozyme. This is Ribonuclease P protein component from Streptococcus pneumoniae (strain JJA).